The primary structure comprises 77 residues: Exodeoxyribonuclease 7 small subunit (77 aa).

The protein belongs to the XseB family. As to quaternary structure, heterooligomer composed of large and small subunits.

It is found in the cytoplasm. It catalyses the reaction Exonucleolytic cleavage in either 5'- to 3'- or 3'- to 5'-direction to yield nucleoside 5'-phosphates.. In terms of biological role, bidirectionally degrades single-stranded DNA into large acid-insoluble oligonucleotides, which are then degraded further into small acid-soluble oligonucleotides. This Alkaliphilus oremlandii (strain OhILAs) (Clostridium oremlandii (strain OhILAs)) protein is Exodeoxyribonuclease 7 small subunit.